The following is a 132-amino-acid chain: Small ribosomal subunit protein uS8 (132 aa).

The protein belongs to the universal ribosomal protein uS8 family. As to quaternary structure, part of the 30S ribosomal subunit. Contacts proteins S5 and S12.

Its function is as follows. One of the primary rRNA binding proteins, it binds directly to 16S rRNA central domain where it helps coordinate assembly of the platform of the 30S subunit. The polypeptide is Small ribosomal subunit protein uS8 (Streptococcus suis (strain 98HAH33)).